The primary structure comprises 379 residues: Pre-mRNA-processing protein 45 (379 aa).

The segment covering 1-10 (MFSNRLPPPK) has biased composition (pro residues). Disordered stretches follow at residues 1–22 (MFSN…ALSS) and 353–379 (SEGA…NYGA). The segment covering 368 to 379 (AESDDKSDNYGA) has biased composition (basic and acidic residues).

Belongs to the SNW family. Belongs to the CWC complex (or CEF1-associated complex), a spliceosome sub-complex reminiscent of a late-stage spliceosome composed of the U2, U5 and U6 snRNAs and at least BUD13, BUD31, BRR2, CDC40, CEF1, CLF1, CUS1, CWC2, CWC15, CWC21, CWC22, CWC23, CWC24, CWC25, CWC27, ECM2, HSH155, IST3, ISY1, LEA1, MSL1, NTC20, PRP8, PRP9, PRP11, PRP19, PRP21, PRP22, PRP45, PRP46, SLU7, SMB1, SMD1, SMD2, SMD3, SMX2, SMX3, SNT309, SNU114, SPP2, SYF1, SYF2, RSE1 and YJU2. Interacts with CLF1, PRP22 and PRP46. Interacts with SPP382.

The protein resides in the nucleus. Functionally, involved in pre-mRNA splicing. Associated with the spliceosome throughout the splicing reactions, until after the second catalytic step. This Saccharomyces cerevisiae (strain ATCC 204508 / S288c) (Baker's yeast) protein is Pre-mRNA-processing protein 45 (PRP45).